Consider the following 457-residue polypeptide: Bifunctional protein GlmU (457 aa).

The interval 1 to 229 (MSNSAKSVVI…LSEMEGVNNR (229 aa)) is pyrophosphorylase. UDP-N-acetyl-alpha-D-glucosamine is bound by residues 11 to 14 (LAAG), Lys25, Gln76, 81 to 82 (GT), 103 to 105 (YGD), Gly140, Glu154, Asn169, and Asn227. Asp105 provides a ligand contact to Mg(2+). Asn227 lines the Mg(2+) pocket. Residues 230–250 (LQLSALERIYQSEQAEQLLLA) form a linker region. The interval 251–457 (GVMLLDPARF…GWKRPVKEKK (207 aa)) is N-acetyltransferase. Residues Arg333 and Lys351 each coordinate UDP-N-acetyl-alpha-D-glucosamine. His363 functions as the Proton acceptor in the catalytic mechanism. 2 residues coordinate UDP-N-acetyl-alpha-D-glucosamine: Tyr366 and Asn377. Acetyl-CoA is bound by residues Ala380, 386-387 (NY), Ser405, Ala423, and Arg440.

In the N-terminal section; belongs to the N-acetylglucosamine-1-phosphate uridyltransferase family. The protein in the C-terminal section; belongs to the transferase hexapeptide repeat family. Homotrimer. Requires Mg(2+) as cofactor.

The protein resides in the cytoplasm. It carries out the reaction alpha-D-glucosamine 1-phosphate + acetyl-CoA = N-acetyl-alpha-D-glucosamine 1-phosphate + CoA + H(+). The catalysed reaction is N-acetyl-alpha-D-glucosamine 1-phosphate + UTP + H(+) = UDP-N-acetyl-alpha-D-glucosamine + diphosphate. It functions in the pathway nucleotide-sugar biosynthesis; UDP-N-acetyl-alpha-D-glucosamine biosynthesis; N-acetyl-alpha-D-glucosamine 1-phosphate from alpha-D-glucosamine 6-phosphate (route II): step 2/2. The protein operates within nucleotide-sugar biosynthesis; UDP-N-acetyl-alpha-D-glucosamine biosynthesis; UDP-N-acetyl-alpha-D-glucosamine from N-acetyl-alpha-D-glucosamine 1-phosphate: step 1/1. Its pathway is bacterial outer membrane biogenesis; LPS lipid A biosynthesis. Functionally, catalyzes the last two sequential reactions in the de novo biosynthetic pathway for UDP-N-acetylglucosamine (UDP-GlcNAc). The C-terminal domain catalyzes the transfer of acetyl group from acetyl coenzyme A to glucosamine-1-phosphate (GlcN-1-P) to produce N-acetylglucosamine-1-phosphate (GlcNAc-1-P), which is converted into UDP-GlcNAc by the transfer of uridine 5-monophosphate (from uridine 5-triphosphate), a reaction catalyzed by the N-terminal domain. The polypeptide is Bifunctional protein GlmU (Photorhabdus laumondii subsp. laumondii (strain DSM 15139 / CIP 105565 / TT01) (Photorhabdus luminescens subsp. laumondii)).